The primary structure comprises 861 residues: Interleukin-12 receptor subunit beta-2 (861 aa).

Positions M1 to A23 are cleaved as a signal peptide. The Extracellular portion of the chain corresponds to K24–N622. N-linked (GlcNAc...) asparagine glycans are attached at residues N48, N129, N166, and N271. Fibronectin type-III domains lie at Q126–P224, P226–P317, E318–D415, A423–A520, and P521–K620. A WSXWS motif motif is present at residues W305–S309. N-linked (GlcNAc...) asparagine glycans are attached at residues N347, N376, and N480. Residues W623–M643 form a helical membrane-spanning segment. Over R644–L861 the chain is Cytoplasmic. Positions C662–A670 match the Box 1 motif motif. The disordered stretch occupies residues F718–G761. Phosphotyrosine is present on Y800.

This sequence belongs to the type I cytokine receptor family. Type 2 subfamily. Heterodimer/heterooligomer; disulfide-linked. The functional high affinity IL12 receptor is composed of I12RB1 and IL12RB2. Il12RB2 binds JAK2 (via its N-terminal) through a membrane-proximal region of the cytoplasmic domain. On IL12 stimulation, phosphorylated on C-terminal tyrosine residues.

It localises to the membrane. Functionally, receptor for interleukin-12. This subunit is the signaling component coupling to the JAK2/STAT4 pathway. In Sus scrofa (Pig), this protein is Interleukin-12 receptor subunit beta-2 (IL12RB2).